We begin with the raw amino-acid sequence, 311 residues long: Aspartate carbamoyltransferase catalytic subunit (311 aa).

Carbamoyl phosphate contacts are provided by R55 and T56. Position 85 (K85) interacts with L-aspartate. Residues R106, H135, and Q138 each contribute to the carbamoyl phosphate site. L-aspartate-binding residues include R168 and R230. Carbamoyl phosphate-binding residues include L268 and P269.

The protein belongs to the aspartate/ornithine carbamoyltransferase superfamily. ATCase family. As to quaternary structure, heterododecamer (2C3:3R2) of six catalytic PyrB chains organized as two trimers (C3), and six regulatory PyrI chains organized as three dimers (R2).

It carries out the reaction carbamoyl phosphate + L-aspartate = N-carbamoyl-L-aspartate + phosphate + H(+). Its pathway is pyrimidine metabolism; UMP biosynthesis via de novo pathway; (S)-dihydroorotate from bicarbonate: step 2/3. Catalyzes the condensation of carbamoyl phosphate and aspartate to form carbamoyl aspartate and inorganic phosphate, the committed step in the de novo pyrimidine nucleotide biosynthesis pathway. This is Aspartate carbamoyltransferase catalytic subunit from Proteus mirabilis (strain HI4320).